An 82-amino-acid chain; its full sequence is ATP synthase subunit c (82 aa).

2 consecutive transmembrane segments (helical) span residues 5 to 25 (IASASVLAAALAIGLAAIGPG) and 57 to 77 (LAFMESLTIYGLVIALVLLFA).

The protein belongs to the ATPase C chain family. In terms of assembly, F-type ATPases have 2 components, F(1) - the catalytic core - and F(0) - the membrane proton channel. F(1) has five subunits: alpha(3), beta(3), gamma(1), delta(1), epsilon(1). F(0) has four main subunits: a(1), b(1), b'(1) and c(10-14). The alpha and beta chains form an alternating ring which encloses part of the gamma chain. F(1) is attached to F(0) by a central stalk formed by the gamma and epsilon chains, while a peripheral stalk is formed by the delta, b and b' chains.

It is found in the cellular thylakoid membrane. In terms of biological role, f(1)F(0) ATP synthase produces ATP from ADP in the presence of a proton or sodium gradient. F-type ATPases consist of two structural domains, F(1) containing the extramembraneous catalytic core and F(0) containing the membrane proton channel, linked together by a central stalk and a peripheral stalk. During catalysis, ATP synthesis in the catalytic domain of F(1) is coupled via a rotary mechanism of the central stalk subunits to proton translocation. Functionally, key component of the F(0) channel; it plays a direct role in translocation across the membrane. A homomeric c-ring of between 10-14 subunits forms the central stalk rotor element with the F(1) delta and epsilon subunits. The polypeptide is ATP synthase subunit c (Cyanothece sp. (strain PCC 7425 / ATCC 29141)).